Here is a 506-residue protein sequence, read N- to C-terminus: Cytochrome P450 monooxygenase tpcB (506 aa).

Cys450 is a heme binding site.

The protein belongs to the cytochrome P450 family. The cofactor is heme.

It participates in secondary metabolite biosynthesis; terpenoid biosynthesis. Cytochrome P450 monooxygenase; part of the gene cluster that mediates the biosynthesis of terpestacin. The bifunctional terpene synthase tpcA converts isopentenyl diphosphate (IPP) and dimethylallyl diphosphate (DMAPP) into the sesterterpene preterpestacin I. The C-terminal prenyltransferase (PT) domain of tpcA catalyzes formation of GFPP, whereas the N-terminal terpene cyclase (TC) domain catalyzes the cyclization of GFPP into preterpestacin I. The cytochrome P450 monooxygenase tpcB then hydroxylates preterpestacin I to yield 24-hydroxypreterpstacin I (renamed as preterpestacin II) whereas the cytochrome P450 monooxygenase tpcC further hydroxylates preterpestacin II to yield 16,17-dihydroxypreterpestacin II (renamed as preterpestacin III). Finally, the FAD-dependent monooxygenase tpcD converts preterpestacin III into terpestacin. The polypeptide is Cytochrome P450 monooxygenase tpcB (Cochliobolus heterostrophus (strain C5 / ATCC 48332 / race O) (Southern corn leaf blight fungus)).